The primary structure comprises 123 residues: Large ribosomal subunit protein bL12 (123 aa).

It belongs to the bacterial ribosomal protein bL12 family. As to quaternary structure, homodimer. Part of the ribosomal stalk of the 50S ribosomal subunit. Forms a multimeric L10(L12)X complex, where L10 forms an elongated spine to which 2 to 4 L12 dimers bind in a sequential fashion. Binds GTP-bound translation factors.

Its function is as follows. Forms part of the ribosomal stalk which helps the ribosome interact with GTP-bound translation factors. Is thus essential for accurate translation. This chain is Large ribosomal subunit protein bL12, found in Rhodopseudomonas palustris (strain BisB5).